The chain runs to 283 residues: Bifunctional protein FolD (283 aa).

166 to 168 provides a ligand contact to NADP(+); the sequence is GAS.

This sequence belongs to the tetrahydrofolate dehydrogenase/cyclohydrolase family. In terms of assembly, homodimer.

It catalyses the reaction (6R)-5,10-methylene-5,6,7,8-tetrahydrofolate + NADP(+) = (6R)-5,10-methenyltetrahydrofolate + NADPH. It carries out the reaction (6R)-5,10-methenyltetrahydrofolate + H2O = (6R)-10-formyltetrahydrofolate + H(+). The protein operates within one-carbon metabolism; tetrahydrofolate interconversion. Its function is as follows. Catalyzes the oxidation of 5,10-methylenetetrahydrofolate to 5,10-methenyltetrahydrofolate and then the hydrolysis of 5,10-methenyltetrahydrofolate to 10-formyltetrahydrofolate. The protein is Bifunctional protein FolD of Coxiella burnetii (strain CbuG_Q212) (Coxiella burnetii (strain Q212)).